We begin with the raw amino-acid sequence, 202 residues long: Holliday junction branch migration complex subunit RuvA (202 aa).

The tract at residues 1–65 (MIAYVEGRVA…EDALELFGFS (65 aa)) is domain I. The segment at 66-144 (TWDERQTFMV…VEDLPAGLVL (79 aa)) is domain II. The interval 145-155 (AGGAAPGGVFR) is flexible linker. The domain III stretch occupies residues 155–202 (RDALAGLGNLGYLEDEAAPVLKEVLKAEPDLDVAGALRAALKALARGR).

The protein belongs to the RuvA family. In terms of assembly, homotetramer. Forms an RuvA(8)-RuvB(12)-Holliday junction (HJ) complex. HJ DNA is sandwiched between 2 RuvA tetramers; dsDNA enters through RuvA and exits via RuvB. An RuvB hexamer assembles on each DNA strand where it exits the tetramer. Each RuvB hexamer is contacted by two RuvA subunits (via domain III) on 2 adjacent RuvB subunits; this complex drives branch migration. In the full resolvosome a probable DNA-RuvA(4)-RuvB(12)-RuvC(2) complex forms which resolves the HJ.

The protein resides in the cytoplasm. The RuvA-RuvB-RuvC complex processes Holliday junction (HJ) DNA during genetic recombination and DNA repair, while the RuvA-RuvB complex plays an important role in the rescue of blocked DNA replication forks via replication fork reversal (RFR). RuvA specifically binds to HJ cruciform DNA, conferring on it an open structure. The RuvB hexamer acts as an ATP-dependent pump, pulling dsDNA into and through the RuvAB complex. HJ branch migration allows RuvC to scan DNA until it finds its consensus sequence, where it cleaves and resolves the cruciform DNA. The chain is Holliday junction branch migration complex subunit RuvA from Nitratidesulfovibrio vulgaris (strain DSM 19637 / Miyazaki F) (Desulfovibrio vulgaris).